A 449-amino-acid polypeptide reads, in one-letter code: L-seryl-tRNA(Sec) selenium transferase (449 aa).

Lysine 286 carries the post-translational modification N6-(pyridoxal phosphate)lysine.

It belongs to the SelA family. Requires pyridoxal 5'-phosphate as cofactor.

It localises to the cytoplasm. It catalyses the reaction L-seryl-tRNA(Sec) + selenophosphate + H(+) = L-selenocysteinyl-tRNA(Sec) + phosphate. It functions in the pathway aminoacyl-tRNA biosynthesis; selenocysteinyl-tRNA(Sec) biosynthesis; selenocysteinyl-tRNA(Sec) from L-seryl-tRNA(Sec) (bacterial route): step 1/1. Converts seryl-tRNA(Sec) to selenocysteinyl-tRNA(Sec) required for selenoprotein biosynthesis. This is L-seryl-tRNA(Sec) selenium transferase from Sulfurimonas denitrificans (strain ATCC 33889 / DSM 1251) (Thiomicrospira denitrificans (strain ATCC 33889 / DSM 1251)).